The sequence spans 255 residues: Putative cysteine-rich repeat secretory protein 27 (255 aa).

Residues 1-26 (MISKFGSVHILAVVAIQLLIIPSVSS) form the signal peptide. Gnk2-homologous domains are found at residues 33 to 135 (YLHH…TINS) and 141 to 252 (YEND…LYPF).

Belongs to the cysteine-rich repeat secretory protein family.

Its subcellular location is the secreted. This is Putative cysteine-rich repeat secretory protein 27 (CRRSP27) from Arabidopsis thaliana (Mouse-ear cress).